We begin with the raw amino-acid sequence, 160 residues long: Competence protein ComGD (160 aa).

Residues A30–L50 form a helical membrane-spanning segment.

In terms of assembly, the transformation pili are flexible filaments, consisting mainly of the major pilin ComGC and smaller amounts of the minor pilins, including at least ComGD, ComGF and ComGG, and perhaps ComGE. Interacts with ComGE. Interacts with ComGF. Interacts with ComGG.

Its subcellular location is the cell membrane. The protein resides in the cell surface. The protein localises to the fimbrium. In terms of biological role, required for formation of the type IV-like pilus (T4P) that plays a role in transformation. Transformation pili are dynamically extended and retracted, perhaps thereby promoting DNA uptake and transformation. Involved in transformation. Required for DNA binding. The protein is Competence protein ComGD of Streptococcus pneumoniae (strain ATCC BAA-255 / R6).